Here is a 1053-residue protein sequence, read N- to C-terminus: 3-hydroxy-3-methylglutaryl-coenzyme A reductase (1053 aa).

The Cytoplasmic portion of the chain corresponds to 1-8; it reads MIYKLAAR. Residues 9-29 form a helical membrane-spanning segment; that stretch reads YPIQVIAIVGILVSMAYFSFL. At 30–203 the chain is on the lumenal side; sequence EALTQEDFPV…LKIASQASKT (174 aa). An N-linked (GlcNAc...) asparagine glycan is attached at N137. A helical membrane pass occupies residues 204-224; it reads ELLIVGTAYACMLISIVSLYL. One can recognise an SSD domain in the interval 204 to 365; the sequence is ELLIVGTAYA…FSFFVAILTL (162 aa). The Cytoplasmic segment spans residues 225–232; it reads KMRRLGSK. Residues 233-253 form a helical membrane-spanning segment; that stretch reads FWLFFSVLLSTLFSVQFAMTL. The Lumenal segment spans residues 254–258; the sequence is VRASG. The helical transmembrane segment at 259–279 threads the bilayer; the sequence is VRISLVSLIESLPFLINVVAL. Residues 280 to 320 are Cytoplasmic-facing; it reads DKAAELTRQVITRCSVSDSHSPMHEDIAKACRNAAPPILRH. 2 consecutive transmembrane segments (helical) span residues 321–341 and 342–362; these read FSFG…IKQF and FLFA…FVAI. At 363–417 the chain is on the cytoplasmic side; the sequence is LTLKLEMRRYNAKDDVRKVLIEEGLSESTARHVADGNDSSATTSAGSRYFKVRYG. The chain crosses the membrane as a helical span at residues 418-438; the sequence is TKIILFIFIAFNLFELCSIPF. The Lumenal segment spans residues 439-526; it reads KHYAATSAAA…NNWSHYISAS (88 aa). N-linked (GlcNAc...) asparagine glycosylation is present at N518. A helical membrane pass occupies residues 527–547; it reads FLSKWIVCALSLSIAVNVFLL. Topologically, residues 548 to 1053 are cytoplasmic; the sequence is NAARLNSIKE…KSVNSRVPGR (506 aa). Residue E712 is the Charge relay system of the active site. Residue 718–724 participates in CoA binding; the sequence is STMRGCK. NADP(+) contacts are provided by residues 779 to 781 and 806 to 814; these read SRF and DAMGMNMIS. K846 functions as the Charge relay system in the catalytic mechanism. A CoA-binding site is contributed by 875–877; that stretch reads VLK. D922 serves as the catalytic Charge relay system. 1017–1018 provides a ligand contact to CoA; the sequence is SH. H1018 (proton donor) is an active-site residue. 1022–1023 is an NADP(+) binding site; sequence NR. S1024 carries the post-translational modification Phosphoserine. T1028 is subject to Phosphothreonine. The tract at residues 1028-1053 is disordered; it reads TPAMDSSAKKPATDALKSVNSRVPGR.

This sequence belongs to the HMG-CoA reductase family.

The protein localises to the endoplasmic reticulum membrane. Its subcellular location is the nucleus envelope. The enzyme catalyses (R)-mevalonate + 2 NADP(+) + CoA = (3S)-3-hydroxy-3-methylglutaryl-CoA + 2 NADPH + 2 H(+). It participates in metabolic intermediate biosynthesis; (R)-mevalonate biosynthesis; (R)-mevalonate from acetyl-CoA: step 3/3. Functionally, part of the first module of ergosterol biosynthesis pathway that includes the early steps of the pathway, conserved across all eukaryotes, and which results in the formation of mevalonate from acetyl-coenzyme A (acetyl-CoA). Hmg1 catalyzes the reduction of hydroxymethylglutaryl-CoA (HMG-CoA) to mevalonate. The first module starts with the action of the cytosolic acetyl-CoA acetyltransferase eg10 that catalyzes the formation of acetoacetyl-CoA. The hydroxymethylglutaryl-CoA synthases erg13 then condenses acetyl-CoA with acetoacetyl-CoA to form HMG-CoA. The rate-limiting step of the early module is the reduction to mevalonate by the 3-hydroxy-3-methylglutaryl-coenzyme A (HMG-CoA) reductases hcs1. The protein is 3-hydroxy-3-methylglutaryl-coenzyme A reductase of Schizosaccharomyces pombe (strain 972 / ATCC 24843) (Fission yeast).